The sequence spans 74 residues: High-potential iron-sulfur protein isozyme 2 (74 aa).

The [4Fe-4S] cluster site is built by Cys36, Cys39, Cys53, and Cys67.

Homodimer.

Its function is as follows. Specific class of high-redox-potential 4Fe-4S ferredoxins. Functions in anaerobic electron transport in most purple and in some other photosynthetic bacteria and in at least one genus (Paracoccus) of halophilic, denitrifying bacteria. The polypeptide is High-potential iron-sulfur protein isozyme 2 (Ectothiorhodospira mobilis).